A 224-amino-acid chain; its full sequence is Putative tyrosine-protein phosphatase OCA6 (224 aa).

Position 2 is a phosphothreonine (Thr-2). In terms of domain architecture, Tyrosine-protein phosphatase spans 8–170; it reads QFSTVQPNLY…FNSEIEVDDL (163 aa). The Phosphocysteine intermediate role is filled by Cys-114.

This sequence belongs to the protein-tyrosine phosphatase family.

It localises to the cytoplasm. The catalysed reaction is O-phospho-L-tyrosyl-[protein] + H2O = L-tyrosyl-[protein] + phosphate. Required for replication of Brome mosaic virus (BMV). In Saccharomyces cerevisiae (strain ATCC 204508 / S288c) (Baker's yeast), this protein is Putative tyrosine-protein phosphatase OCA6 (OCA6).